The chain runs to 87 residues: uncharacterized protein (87 aa).

The protein to H.pylori HP0495/JHP0447.

This is an uncharacterized protein from Campylobacter jejuni subsp. jejuni serotype O:2 (strain ATCC 700819 / NCTC 11168).